The primary structure comprises 877 residues: MEKLGMNEIREKFLSFFESKGHLRLPSFSLIPKNDKSLLLINSGMAPLKPYFTGKETPPSKRVTTCQRCIRTPDIERVGKTARHGTFFEMLGNFSFGDYFKKEAIPWAWEFVTEVLGLPVNRLWVSIYEEDDEAFEIWNKIVGLPPERIVRMGKEDNFWEIGTGPCGPSSEIYFDRGEEKGCGKPTCGVGCDCDRFIEFWNLVFTQFNKDEQGNYHRLPNPNIDTGMGLERIATIMQGVDSIFDVDVIRGITNFVSQIAEVEYGKDAEKDVSLRVITDHIRGITFMISDGILPSNEGRGYVLRRLLRRAARHGKLLGINDTFLYRVVDSVVENYGEAYPEIIDRKDYIKRIVKLEEERFKETIDQGLTILQDYINELKVQGKTVLEGSKAFKLYDTYGFPLDLTKEILQEAGITVDEEGYTKELEKQRIRARSSRKEDNSLWEQDIYSTLGDIKTKFVGYDTYESNSKVLAIVKDEELVEEAEAGDDVSIILDVTPFYAESGGQIGDNGILENENVLIKVKDCKKVGDRFIHIGTIERGLISVRDEVKAQIDVVSRRNAARNHTATHLLHKALKEILGDHVHQAGSLVADDRLRFDFSHYQAVTKEELKQIENRVNEKIYQSLNVHIEEKTYDEAVKEGAVALFTEKYGDKVRVVKIDDYSMELCGGTHVKNTNEIGIFKIVSESAVGAGLRRIEALTGLAAIKYLEEKEEILKEASDLLKAQDKEIVSKIESLQQVLKTKDKEIEQLKIKMASILANSLINSAISLDGIKVVVSKVEDYDSEALKALGDILKDKLKTAAIVLASSTPEKAIFVGMATKDVVQKGINMGAVIKEVCKVSEGNGGGRPDMAQGTGKNPSKVEEALNKAIDIVKEQLKN.

Zn(2+) contacts are provided by histidine 563, histidine 567, cysteine 665, and histidine 669.

Belongs to the class-II aminoacyl-tRNA synthetase family. Zn(2+) serves as cofactor.

The protein resides in the cytoplasm. It catalyses the reaction tRNA(Ala) + L-alanine + ATP = L-alanyl-tRNA(Ala) + AMP + diphosphate. Functionally, catalyzes the attachment of alanine to tRNA(Ala) in a two-step reaction: alanine is first activated by ATP to form Ala-AMP and then transferred to the acceptor end of tRNA(Ala). Also edits incorrectly charged Ser-tRNA(Ala) and Gly-tRNA(Ala) via its editing domain. This is Alanine--tRNA ligase from Thermoanaerobacter pseudethanolicus (strain ATCC 33223 / 39E) (Clostridium thermohydrosulfuricum).